The chain runs to 227 residues: MADS-box transcription factor 25 (227 aa).

Positions 1–61 constitute an MADS-box domain; it reads MGRGKIAIKR…GRLYDFSSSS (61 aa). The region spanning 86–176 is the K-box domain; the sequence is AKFWQREVTT…RKKFNIAHQR (91 aa). Positions 183-227 are disordered; sequence KLNSGESTSSEQVTRSSKDPGESSTPRDSRVCIDLELSQKEVEDE. A compositionally biased stretch (polar residues) spans 186–197; the sequence is SGESTSSEQVTR. The span at 198–227 shows a compositional bias: basic and acidic residues; sequence SSKDPGESSTPRDSRVCIDLELSQKEVEDE.

In terms of tissue distribution, expressed in seedling roots.

It is found in the nucleus. Its function is as follows. Probable transcription factor. In Oryza sativa subsp. japonica (Rice), this protein is MADS-box transcription factor 25 (MADS25).